Here is a 158-residue protein sequence, read N- to C-terminus: Regulator of sigma D (158 aa).

It belongs to the Rsd/AlgQ family. Interacts with RpoD.

Its subcellular location is the cytoplasm. Functionally, binds RpoD and negatively regulates RpoD-mediated transcription activation by preventing the interaction between the primary sigma factor RpoD with the catalytic core of the RNA polymerase and with promoter DNA. May be involved in replacement of the RNA polymerase sigma subunit from RpoD to RpoS during the transition from exponential growth to the stationary phase. This chain is Regulator of sigma D, found in Escherichia coli (strain SMS-3-5 / SECEC).